Here is a 315-residue protein sequence, read N- to C-terminus: Uracil-DNA glycosylase (315 aa).

A compositionally biased stretch (low complexity) spans Ala-35 to Pro-80. Positions Ala-35 to Thr-88 are disordered. Catalysis depends on Asp-158, which acts as the Proton acceptor.

Belongs to the uracil-DNA glycosylase (UDG) superfamily. UNG family.

It localises to the host nucleus. It carries out the reaction Hydrolyzes single-stranded DNA or mismatched double-stranded DNA and polynucleotides, releasing free uracil.. Its function is as follows. Excises uracil residues from the DNA which can arise as a result of misincorporation of dUMP residues by DNA polymerase or deamination of cytosines. Therefore may reduce deleterious uracil incorporation into the viral genome, particularly in terminally differentiated cells which lack DNA repair enzymes. This Suid herpesvirus 1 (strain Indiana-Funkhauser / Becker) (SuHV-1) protein is Uracil-DNA glycosylase (UL2).